The primary structure comprises 693 residues: DNA ligase (693 aa).

NAD(+)-binding positions include 45–49 (DSEYD), 94–95 (SI), and Glu131. The N6-AMP-lysine intermediate role is filled by Lys133. Residues Arg154, Glu190, Lys307, and Lys331 each contribute to the NAD(+) site. Zn(2+) contacts are provided by Cys429, Cys432, Cys447, and Cys453. The region spanning 615-693 (ASSSKLEGKT…EEGLLSLLAE (79 aa)) is the BRCT domain.

Belongs to the NAD-dependent DNA ligase family. LigA subfamily. Requires Mg(2+) as cofactor. The cofactor is Mn(2+).

The catalysed reaction is NAD(+) + (deoxyribonucleotide)n-3'-hydroxyl + 5'-phospho-(deoxyribonucleotide)m = (deoxyribonucleotide)n+m + AMP + beta-nicotinamide D-nucleotide.. Its function is as follows. DNA ligase that catalyzes the formation of phosphodiester linkages between 5'-phosphoryl and 3'-hydroxyl groups in double-stranded DNA using NAD as a coenzyme and as the energy source for the reaction. It is essential for DNA replication and repair of damaged DNA. This Methylobacillus flagellatus (strain ATCC 51484 / DSM 6875 / VKM B-1610 / KT) protein is DNA ligase.